A 322-amino-acid polypeptide reads, in one-letter code: Secreted effector protein SseI (322 aa).

In terms of assembly, interacts with host IQGAP1 and host TRIP6 (thyroid receptor-interacting protein 6).

The protein resides in the secreted. Its subcellular location is the host cytoplasm. In terms of biological role, effector proteins function to alter host cell physiology and promote bacterial survival in host tissues. This protein is required to maintain a long-term chronic systemic infection in mice. It inhibits normal cell migration of primary macrophages and dendritic cells, by a mechanism that involves interaction with the host factor IQGAP1, an important regulator of the cytoskeleton and cell migration. Also accelerates the systemic spread of infection from the gastrointestinal tract to the bloodstream, probably by interacting with host TRIP6. The chain is Secreted effector protein SseI (sseI) from Salmonella typhimurium (strain LT2 / SGSC1412 / ATCC 700720).